The chain runs to 557 residues: Eudesmanediol synthase (557 aa).

Residues D310 and D314 each contribute to the Mg(2+) site. The substrate site is built by D310, D314, R450, and N453. Positions 310-314 (DDTFD) match the DDXXD motif motif. Mg(2+)-binding residues include N453 and S457.

Belongs to the terpene synthase family. As to quaternary structure, monomer. The cofactor is Mg(2+). Requires Mn(2+) as cofactor. Specifically expressed in roots.

It is found in the cytoplasm. The enzyme catalyses (2E,6E)-farnesyl diphosphate + 2 H2O = 7-epi-ent-eudesmane-5,11-diol + diphosphate. It functions in the pathway secondary metabolite biosynthesis; terpenoid biosynthesis. Functionally, component of the volatile terpenes biosynthesis pathways. Dihydroxylated sesquiterpenoid synthase that generates dually hydroxylated products directly from (E,E)-farnesyl diphosphate, primarily eudesmane-2,11-diol, along with two closely related structural isomers. This is Eudesmanediol synthase from Zea mays (Maize).